The chain runs to 307 residues: Porphobilinogen deaminase (307 aa).

Cysteine 239 is subject to S-(dipyrrolylmethanemethyl)cysteine.

The protein belongs to the HMBS family. As to quaternary structure, monomer. Dipyrromethane is required as a cofactor.

It carries out the reaction 4 porphobilinogen + H2O = hydroxymethylbilane + 4 NH4(+). The protein operates within porphyrin-containing compound metabolism; protoporphyrin-IX biosynthesis; coproporphyrinogen-III from 5-aminolevulinate: step 2/4. Functionally, tetrapolymerization of the monopyrrole PBG into the hydroxymethylbilane pre-uroporphyrinogen in several discrete steps. The polypeptide is Porphobilinogen deaminase (hemC) (Campylobacter jejuni subsp. jejuni serotype O:2 (strain ATCC 700819 / NCTC 11168)).